The primary structure comprises 215 residues: Nascent polypeptide-associated complex subunit alpha (215 aa).

The segment at 1-81 (MPGEATETVP…SEKKARKAMS (81 aa)) is disordered. Residues 9–21 (VPVTEQEMQQPQV) show a composition bias toward polar residues. Over residues 29 to 42 (SDSDDSVPELEEQD) the composition is skewed to acidic residues. Low complexity predominate over residues 43–57 (SAQTQTQQAQLAAAA). The region spanning 70–135 (SRSEKKARKA…AKIEDLSQQA (66 aa)) is the NAC-A/B domain. In terms of domain architecture, UBA spans 176 to 213 (VEVKDIELVMSQANVSRAKAVRALKNNNNDIVNAIMEL).

Belongs to the NAC-alpha family.

Its function is as follows. May promote appropriate targeting of ribosome-nascent polypeptide complexes. This is Nascent polypeptide-associated complex subunit alpha (naca) from Oreochromis niloticus (Nile tilapia).